A 239-amino-acid chain; its full sequence is MPKSCAARQCCNRYSSRRKQLTFHRFPFSRPELLKEWVLNIGRGNFKPKQHTVICSEHFRPECFSAFGNRKNLKHNAVPTVFAFQDPTQQVRENTDPASERGNASSSQKEKVLPEAGAGEDSPGRNMDTALEELQLPPNAEGHVKQVSPRRPQATEAVGRPTGPAGLRRTPNKQPSDHSYALLDLDSLKKKLFLTLKENEKLRKRLQAQRLVMRRMSSRLRACKGHQGLQARLGPEQQS.

The segment at 1-82 (MPKSCAARQC…LKHNAVPTVF (82 aa)) adopts a THAP-type zinc-finger fold. A disordered region spans residues 84–177 (FQDPTQQVRE…RRTPNKQPSD (94 aa)). Serine 122 bears the Phosphoserine mark. Positions 177–180 (DHSY) match the HCFC1-binding motif (HBM) motif.

As to quaternary structure, component of a THAP1/THAP3-HCFC1-OGT complex that contains at least, either THAP1 or THAP3, HCFC1 and OGT. Interacts directly with OGT and HCFC1 (via its HBM). In terms of tissue distribution, highly expressed in heart, skeletal muscle and placenta. Weaker expression in brain, kidney and liver.

Functionally, component of a THAP1/THAP3-HCFC1-OGT complex that is required for the regulation of the transcriptional activity of RRM1. The chain is THAP domain-containing protein 3 (THAP3) from Homo sapiens (Human).